Consider the following 490-residue polypeptide: Probable malate:quinone oxidoreductase (490 aa).

It belongs to the MQO family. It depends on FAD as a cofactor.

It carries out the reaction (S)-malate + a quinone = a quinol + oxaloacetate. It participates in carbohydrate metabolism; tricarboxylic acid cycle; oxaloacetate from (S)-malate (quinone route): step 1/1. The chain is Probable malate:quinone oxidoreductase from Corynebacterium jeikeium (strain K411).